We begin with the raw amino-acid sequence, 1897 residues long: 1,3-beta-glucan synthase component FKS1 (1897 aa).

The segment at 1 to 106 (MSGYPAGHYE…SETFSDFTMR (106 aa)) is disordered. Residues 8-29 (HYEDGYGHQEHGGDAYYQDEHG) are compositionally biased toward basic and acidic residues. Low complexity predominate over residues 74 to 83 (GDQYYDQGNG). The next 17 membrane-spanning stretches (helical) occupy residues 487–507 (IWVI…PTLY), 525–545 (WSAV…ATLC), 564–584 (LMFL…VFGF), 591–611 (TICL…FFFF), 655–675 (LWIC…TLSL), 707–727 (ILLG…SYLW), 728–748 (YVIC…VSIW), 1329–1349 (NMFI…LGAL), 1386–1406 (CVVS…VQEL), 1473–1493 (FAGP…FATS), 1497–1517 (TPAL…PFLF), 1588–1608 (IFFS…VPYL), 1630–1650 (IAIV…MFFG), 1666–1686 (FGAV…LVIF), 1701–1721 (VLGM…IISL), 1766–1786 (FSAD…ALCI), and 1826–1846 (FAIL…APLV).

It belongs to the glycosyltransferase 48 family. In terms of assembly, component of the 1,3-beta-glucan synthase (GS) complex composed of a catalytic subunit fksA and a regulatory subunit.

The protein localises to the mitochondrion. It localises to the cell membrane. It carries out the reaction [(1-&gt;3)-beta-D-glucosyl](n) + UDP-alpha-D-glucose = [(1-&gt;3)-beta-D-glucosyl](n+1) + UDP + H(+). Catalytic subunit of the 1,3-beta-glucan synthase. Synthesizes 1,3-beta-glucan, a major structural component of the fungal cell wall. Involved in cell wall synthesis, maintenance and remodeling. The polypeptide is 1,3-beta-glucan synthase component FKS1 (Aspergillus niger (strain ATCC MYA-4892 / CBS 513.88 / FGSC A1513)).